A 426-amino-acid chain; its full sequence is Serine--tRNA ligase (426 aa).

231–233 is an L-serine binding site; sequence TAE. 262–264 serves as a coordination point for ATP; it reads RSE. Glu-285 is an L-serine binding site. Position 349 to 352 (349 to 352) interacts with ATP; the sequence is EISS. Residue Ser-385 participates in L-serine binding.

This sequence belongs to the class-II aminoacyl-tRNA synthetase family. Type-1 seryl-tRNA synthetase subfamily. As to quaternary structure, homodimer. The tRNA molecule binds across the dimer.

Its subcellular location is the cytoplasm. The enzyme catalyses tRNA(Ser) + L-serine + ATP = L-seryl-tRNA(Ser) + AMP + diphosphate + H(+). It catalyses the reaction tRNA(Sec) + L-serine + ATP = L-seryl-tRNA(Sec) + AMP + diphosphate + H(+). Its pathway is aminoacyl-tRNA biosynthesis; selenocysteinyl-tRNA(Sec) biosynthesis; L-seryl-tRNA(Sec) from L-serine and tRNA(Sec): step 1/1. Catalyzes the attachment of serine to tRNA(Ser). Is also able to aminoacylate tRNA(Sec) with serine, to form the misacylated tRNA L-seryl-tRNA(Sec), which will be further converted into selenocysteinyl-tRNA(Sec). This is Serine--tRNA ligase from Brevibacillus brevis (strain 47 / JCM 6285 / NBRC 100599).